A 340-amino-acid polypeptide reads, in one-letter code: CMP-sialic acid transporter 1 (340 aa).

The Cytoplasmic segment spans residues 1–5 (MAATP). The helical transmembrane segment at 6-26 (WYFVAVLLTILTSSQGILTTL) threads the bilayer. Residues 27-36 (SQSDGGYKYD) lie on the Lumenal side of the membrane. A helical transmembrane segment spans residues 37 to 57 (YATVPFLAEVFKLIISGLFLW). Topologically, residues 58–78 (REMRTSSSTTSRITTDWKSVR) are cytoplasmic. Residues 79–99 (LFVIPSLIYLIHNNVQFATLT) form a helical membrane-spanning segment. The Lumenal segment spans residues 100–102 (YVD). A helical membrane pass occupies residues 103–125 (TSTYQIMGNLKIVTTGILFRLFL). Residues 126-168 (KRKLSKLQWMAIGLLAVGTTTSQVKGCGEASCDSLFTAPIQGY) lie on the Cytoplasmic side of the membrane. The helical transmembrane segment at 169–189 (LLGILSAGLSALAGIYTEFLM) threads the bilayer. At 190–200 (KRNNDTLYWQN) the chain is on the lumenal side. A helical membrane pass occupies residues 201 to 217 (LQLYTFGSLFNVARLIA). Residues 218–238 (DDFRHGFEKGPWWQRIFDGYS) lie on the Cytoplasmic side of the membrane. A helical transmembrane segment spans residues 239–259 (ITTWLVVLNLGSTGLLVSWLM). The Lumenal segment spans residues 260-282 (KYADNIVKVYSTSMAMLLTMVAS). Residues 283-303 (IYLFSFKPTLQLFLGIVICIM) form a helical membrane-spanning segment. Over 304 to 340 (SLHMYFAPPHTLVDLPVTNEAHAKTLKQVVVEEKTDS) the chain is Cytoplasmic.

It belongs to the nucleotide-sugar transporter family. CMP-Sialate:CMP antiporter (TC 2.A.7.12) subfamily.

Its subcellular location is the golgi apparatus membrane. Functionally, essential protein. Sugar transporter involved in the transport of CMP-sialic acid from the cytoplasm into the Golgi. The chain is CMP-sialic acid transporter 1 from Arabidopsis thaliana (Mouse-ear cress).